The chain runs to 122 residues: Large ribosomal subunit protein uL18 (122 aa).

The protein belongs to the universal ribosomal protein uL18 family. Part of the 50S ribosomal subunit; part of the 5S rRNA/L5/L18/L25 subcomplex. Contacts the 5S and 23S rRNAs.

This is one of the proteins that bind and probably mediate the attachment of the 5S RNA into the large ribosomal subunit, where it forms part of the central protuberance. The protein is Large ribosomal subunit protein uL18 of Heliobacterium modesticaldum (strain ATCC 51547 / Ice1).